A 530-amino-acid chain; its full sequence is Arginine--tRNA ligase (530 aa).

Residues 113–123 (ANPTGPLHIGH) carry the 'HIGH' region motif.

It belongs to the class-I aminoacyl-tRNA synthetase family. In terms of assembly, monomer.

The protein localises to the cytoplasm. The enzyme catalyses tRNA(Arg) + L-arginine + ATP = L-arginyl-tRNA(Arg) + AMP + diphosphate. The chain is Arginine--tRNA ligase from Campylobacter jejuni (strain RM1221).